A 456-amino-acid chain; its full sequence is Argininosuccinate lyase (456 aa).

The protein belongs to the lyase 1 family. Argininosuccinate lyase subfamily.

The protein resides in the cytoplasm. It catalyses the reaction 2-(N(omega)-L-arginino)succinate = fumarate + L-arginine. It functions in the pathway amino-acid biosynthesis; L-arginine biosynthesis; L-arginine from L-ornithine and carbamoyl phosphate: step 3/3. The protein is Argininosuccinate lyase of Listeria monocytogenes serotype 4a (strain HCC23).